The chain runs to 399 residues: Argininosuccinate synthase (399 aa).

Residue 9–17 coordinates ATP; sequence AYSGGLDTS. Tyr-88 is an L-citrulline binding site. Gly-118 lines the ATP pocket. Residues Thr-120, Asn-124, and Asp-125 each contribute to the L-aspartate site. Asn-124 is a binding site for L-citrulline. L-citrulline-binding residues include Arg-128, Ser-176, Glu-261, and Tyr-273.

This sequence belongs to the argininosuccinate synthase family. Type 1 subfamily. As to quaternary structure, homotetramer.

The protein resides in the cytoplasm. It catalyses the reaction L-citrulline + L-aspartate + ATP = 2-(N(omega)-L-arginino)succinate + AMP + diphosphate + H(+). Its pathway is amino-acid biosynthesis; L-arginine biosynthesis; L-arginine from L-ornithine and carbamoyl phosphate: step 2/3. This chain is Argininosuccinate synthase, found in Mycobacterium leprae (strain TN).